A 112-amino-acid polypeptide reads, in one-letter code: uncharacterized protein (112 aa).

The 55-residue stretch at 6-60 (LRQLRKAHKLTMEQLAEKIGIAKSSYGGYEAESKKPPLDKLVILARLYDVSVDYI) folds into the HTH cro/C1-type domain. The segment at residues 17 to 36 (MEQLAEKIGIAKSSYGGYEA) is a DNA-binding region (H-T-H motif).

This is an uncharacterized protein from Bacillus subtilis (strain 168).